The following is a 226-amino-acid chain: Ribonuclease 3 (226 aa).

Residues 6–128 (VNQLQKKLGY…LIGAIFLDSD (123 aa)) form the RNase III domain. A Mg(2+)-binding site is contributed by glutamate 41. Aspartate 45 is a catalytic residue. Mg(2+) is bound by residues aspartate 114 and glutamate 117. Residue glutamate 117 is part of the active site. Residues 155–225 (DPKTRLQEYL…AEQALIQLEL (71 aa)) enclose the DRBM domain.

Belongs to the ribonuclease III family. Homodimer. Requires Mg(2+) as cofactor.

The protein resides in the cytoplasm. The catalysed reaction is Endonucleolytic cleavage to 5'-phosphomonoester.. Its function is as follows. Digests double-stranded RNA. Involved in the processing of primary rRNA transcript to yield the immediate precursors to the large and small rRNAs (23S and 16S). Processes some mRNAs, and tRNAs when they are encoded in the rRNA operon. Processes pre-crRNA and tracrRNA of type II CRISPR loci if present in the organism. This chain is Ribonuclease 3, found in Proteus mirabilis (strain HI4320).